The primary structure comprises 282 residues: Energy-coupling factor transporter ATP-binding protein EcfA1 (282 aa).

Residues 6–243 (ISFDHVTFTY…VEMLKRIGLD (238 aa)) form the ABC transporter domain. Residue 40–47 (GHNGSGKS) coordinates ATP.

It belongs to the ABC transporter superfamily. Energy-coupling factor EcfA family. As to quaternary structure, forms a stable energy-coupling factor (ECF) transporter complex composed of 2 membrane-embedded substrate-binding proteins (S component), 2 ATP-binding proteins (A component) and 2 transmembrane proteins (T component).

It localises to the cell membrane. Its function is as follows. ATP-binding (A) component of a common energy-coupling factor (ECF) ABC-transporter complex. Unlike classic ABC transporters this ECF transporter provides the energy necessary to transport a number of different substrates. The sequence is that of Energy-coupling factor transporter ATP-binding protein EcfA1 from Lactobacillus delbrueckii subsp. bulgaricus (strain ATCC BAA-365 / Lb-18).